Here is a 386-residue protein sequence, read N- to C-terminus: MSEYSIFTSESVSEGHPDKMADQISDAILDAIIKDDPNARVAVETLVKTGMAVIAGEVRTNTYVDLEDIVRSVILDIGYNSSDVGFDGASCAVLNAIGKQSGDIAMGVDEASEKDLGAGDQGLMFGYATNETDVLMPAPIYYSHRLVERQAYLRKNSILPWLRPDAKSQVTLRYENGKPVAVEAVVLSTQHTPDVKQSDIREAVMEEIIKHVLPEEWLHSNTQYHINPTGQFIIGGPVGDCGLTGRKIIVDTYGGMARHGGGAFSGKDPSKVDRSAAYAGRYVAKNIVASGLAAKCEIQVSYAIGVSEPTSISVNTFGTGKISDDKIATLVREHFDLRPRGLIDMLDLKRPIYRPTASYGHFGRTGDSFSWERTDKADALRAAAGI.

Position 16 (His-16) interacts with ATP. A Mg(2+)-binding site is contributed by Asp-18. Glu-44 lines the K(+) pocket. The L-methionine site is built by Glu-57 and Gln-100. The interval 100 to 110 is flexible loop; that stretch reads QSGDIAMGVDE. ATP contacts are provided by residues 165-167, Asp-240, 246-247, Ala-263, and Lys-267; these read DAK and RK. Asp-240 is a binding site for L-methionine. Lys-271 is a binding site for L-methionine.

It belongs to the AdoMet synthase family. As to quaternary structure, homotetramer; dimer of dimers. Mg(2+) serves as cofactor. Requires K(+) as cofactor.

Its subcellular location is the cytoplasm. It carries out the reaction L-methionine + ATP + H2O = S-adenosyl-L-methionine + phosphate + diphosphate. It functions in the pathway amino-acid biosynthesis; S-adenosyl-L-methionine biosynthesis; S-adenosyl-L-methionine from L-methionine: step 1/1. Catalyzes the formation of S-adenosylmethionine (AdoMet) from methionine and ATP. The overall synthetic reaction is composed of two sequential steps, AdoMet formation and the subsequent tripolyphosphate hydrolysis which occurs prior to release of AdoMet from the enzyme. This is S-adenosylmethionine synthase from Hahella chejuensis (strain KCTC 2396).